The primary structure comprises 343 residues: Holliday junction branch migration complex subunit RuvB (343 aa).

Residues 1–178 (MNFVQQNREG…FGMILELQFY (178 aa)) are large ATPase domain (RuvB-L). ATP is bound by residues Leu17, Arg18, Gly59, Lys62, Thr63, Thr64, 125 to 127 (EDY), Arg168, Tyr178, and Arg215. Thr63 provides a ligand contact to Mg(2+). The tract at residues 179–249 (TVKELMEIIK…LVEKTMDILE (71 aa)) is small ATPAse domain (RuvB-S). The head domain (RuvB-H) stretch occupies residues 252–343 (KLGLDEMDRK…DESLRKSDES (92 aa)). Residues Arg307 and Arg312 each contribute to the DNA site.

Belongs to the RuvB family. As to quaternary structure, homohexamer. Forms an RuvA(8)-RuvB(12)-Holliday junction (HJ) complex. HJ DNA is sandwiched between 2 RuvA tetramers; dsDNA enters through RuvA and exits via RuvB. An RuvB hexamer assembles on each DNA strand where it exits the tetramer. Each RuvB hexamer is contacted by two RuvA subunits (via domain III) on 2 adjacent RuvB subunits; this complex drives branch migration. In the full resolvosome a probable DNA-RuvA(4)-RuvB(12)-RuvC(2) complex forms which resolves the HJ.

It localises to the cytoplasm. The catalysed reaction is ATP + H2O = ADP + phosphate + H(+). In terms of biological role, the RuvA-RuvB-RuvC complex processes Holliday junction (HJ) DNA during genetic recombination and DNA repair, while the RuvA-RuvB complex plays an important role in the rescue of blocked DNA replication forks via replication fork reversal (RFR). RuvA specifically binds to HJ cruciform DNA, conferring on it an open structure. The RuvB hexamer acts as an ATP-dependent pump, pulling dsDNA into and through the RuvAB complex. RuvB forms 2 homohexamers on either side of HJ DNA bound by 1 or 2 RuvA tetramers; 4 subunits per hexamer contact DNA at a time. Coordinated motions by a converter formed by DNA-disengaged RuvB subunits stimulates ATP hydrolysis and nucleotide exchange. Immobilization of the converter enables RuvB to convert the ATP-contained energy into a lever motion, pulling 2 nucleotides of DNA out of the RuvA tetramer per ATP hydrolyzed, thus driving DNA branch migration. The RuvB motors rotate together with the DNA substrate, which together with the progressing nucleotide cycle form the mechanistic basis for DNA recombination by continuous HJ branch migration. Branch migration allows RuvC to scan DNA until it finds its consensus sequence, where it cleaves and resolves cruciform DNA. In Pseudothermotoga lettingae (strain ATCC BAA-301 / DSM 14385 / NBRC 107922 / TMO) (Thermotoga lettingae), this protein is Holliday junction branch migration complex subunit RuvB.